The sequence spans 314 residues: Cell division protein FtsQ (314 aa).

2 stretches are compositionally biased toward basic and acidic residues: residues 1-15 and 30-57; these read MTEH…RVAD and ESKD…ERRA. The interval 1–57 is disordered; it reads MTEHNEDPQIERVADDAADEEAVTEPLATESKDEPAEHPEFEGPRRRARRERAERRA. Residues 1-99 lie on the Cytoplasmic side of the membrane; sequence MTEHNEDPQI…AARGVVRGLK (99 aa). A helical transmembrane segment spans residues 100 to 120; it reads ALLATVVLAVVGIGLGLALYF. Residues 121–314 are Extracellular-facing; that stretch reads TPAMSAREIV…VSSPDLPTVK (194 aa). The 69-residue stretch at 124 to 192 folds into the POTRA domain; the sequence is MSAREIVIIG…SALRITIVER (69 aa).

It belongs to the FtsQ/DivIB family. FtsQ subfamily.

The protein localises to the cell membrane. Its function is as follows. Essential cell division protein. The polypeptide is Cell division protein FtsQ (Mycobacterium bovis (strain ATCC BAA-935 / AF2122/97)).